The chain runs to 539 residues: E3 ubiquitin-protein ligase arc-1 (539 aa).

The RING-type zinc finger occupies 6–53; that stretch reads CNVCNEEYSARDPLKCPRVLTGCGHTICHNCAISIAGRNSSIFCPFDR. A B box-type zinc finger spans residues 103 to 149; that stretch reads LLNLECDEDSEHVAVIYCTVCDSNLCERCSESTHSTNVLSKHRRIPL. The interval 369–539 is ARF-like; that stretch reads ESRVVLLGLD…LSRLNGTCPV (171 aa). Residues 376-383, 422-426, and 481-484 each bind GTP; these read GLDGAGKT, DVGGL, and NRKD.

It in the C-terminal section; belongs to the small GTPase superfamily. Arf family.

The catalysed reaction is S-ubiquitinyl-[E2 ubiquitin-conjugating enzyme]-L-cysteine + [acceptor protein]-L-lysine = [E2 ubiquitin-conjugating enzyme]-L-cysteine + N(6)-ubiquitinyl-[acceptor protein]-L-lysine.. It participates in protein modification; protein ubiquitination. Its function is as follows. Acts as an E3 ubiquitin-protein ligase. In Caenorhabditis elegans, this protein is E3 ubiquitin-protein ligase arc-1 (arc-1).